A 215-amino-acid polypeptide reads, in one-letter code: Large ribosomal subunit protein uL3 (215 aa).

At Gln151 the chain carries N5-methylglutamine.

It belongs to the universal ribosomal protein uL3 family. As to quaternary structure, part of the 50S ribosomal subunit. Forms a cluster with proteins L14 and L19. Methylated by PrmB.

Functionally, one of the primary rRNA binding proteins, it binds directly near the 3'-end of the 23S rRNA, where it nucleates assembly of the 50S subunit. This Rickettsia massiliae (strain Mtu5) protein is Large ribosomal subunit protein uL3.